The following is a 423-amino-acid chain: Glucose-1-phosphate adenylyltransferase (423 aa).

Alpha-D-glucose 1-phosphate contacts are provided by residues Y107, G172, 187–188, and S205; that span reads EK.

This sequence belongs to the bacterial/plant glucose-1-phosphate adenylyltransferase family. As to quaternary structure, homotetramer.

It carries out the reaction alpha-D-glucose 1-phosphate + ATP + H(+) = ADP-alpha-D-glucose + diphosphate. It functions in the pathway glycan biosynthesis; glycogen biosynthesis. Functionally, involved in the biosynthesis of ADP-glucose, a building block required for the elongation reactions to produce glycogen. Catalyzes the reaction between ATP and alpha-D-glucose 1-phosphate (G1P) to produce pyrophosphate and ADP-Glc. The protein is Glucose-1-phosphate adenylyltransferase of Cereibacter sphaeroides (strain ATCC 17029 / ATH 2.4.9) (Rhodobacter sphaeroides).